Consider the following 267-residue polypeptide: Translation initiation factor 2 subunit alpha (267 aa).

An S1 motif domain is found at 12 to 83; that stretch reads GEYVIATVKE…RRKTVDVSLK (72 aa).

This sequence belongs to the eIF-2-alpha family. In terms of assembly, heterotrimer composed of an alpha, a beta and a gamma chain.

EIF-2 functions in the early steps of protein synthesis by forming a ternary complex with GTP and initiator tRNA. The chain is Translation initiation factor 2 subunit alpha from Staphylothermus marinus (strain ATCC 43588 / DSM 3639 / JCM 9404 / F1).